A 150-amino-acid chain; its full sequence is D-aminoacyl-tRNA deacylase (150 aa).

Residues 136-137 (GP) carry the Gly-cisPro motif, important for rejection of L-amino acids motif.

This sequence belongs to the DTD family. Homodimer.

Its subcellular location is the cytoplasm. The catalysed reaction is glycyl-tRNA(Ala) + H2O = tRNA(Ala) + glycine + H(+). The enzyme catalyses a D-aminoacyl-tRNA + H2O = a tRNA + a D-alpha-amino acid + H(+). An aminoacyl-tRNA editing enzyme that deacylates mischarged D-aminoacyl-tRNAs. Also deacylates mischarged glycyl-tRNA(Ala), protecting cells against glycine mischarging by AlaRS. Acts via tRNA-based rather than protein-based catalysis; rejects L-amino acids rather than detecting D-amino acids in the active site. By recycling D-aminoacyl-tRNA to D-amino acids and free tRNA molecules, this enzyme counteracts the toxicity associated with the formation of D-aminoacyl-tRNA entities in vivo and helps enforce protein L-homochirality. In Staphylococcus epidermidis (strain ATCC 35984 / DSM 28319 / BCRC 17069 / CCUG 31568 / BM 3577 / RP62A), this protein is D-aminoacyl-tRNA deacylase.